A 158-amino-acid chain; its full sequence is NAD(P)H-quinone oxidoreductase subunit J, chloroplastic (158 aa).

This sequence belongs to the complex I 30 kDa subunit family. As to quaternary structure, NDH is composed of at least 16 different subunits, 5 of which are encoded in the nucleus.

It is found in the plastid. Its subcellular location is the chloroplast thylakoid membrane. It carries out the reaction a plastoquinone + NADH + (n+1) H(+)(in) = a plastoquinol + NAD(+) + n H(+)(out). The catalysed reaction is a plastoquinone + NADPH + (n+1) H(+)(in) = a plastoquinol + NADP(+) + n H(+)(out). Functionally, NDH shuttles electrons from NAD(P)H:plastoquinone, via FMN and iron-sulfur (Fe-S) centers, to quinones in the photosynthetic chain and possibly in a chloroplast respiratory chain. The immediate electron acceptor for the enzyme in this species is believed to be plastoquinone. Couples the redox reaction to proton translocation, and thus conserves the redox energy in a proton gradient. This chain is NAD(P)H-quinone oxidoreductase subunit J, chloroplastic, found in Morus indica (Mulberry).